A 244-amino-acid chain; its full sequence is Maintenance of ploidy protein mob2 (244 aa).

Residues 14–45 form a disordered region; sequence NRSKRHQNLSDASSSSGSFSKKSSTSQLVRTG. Positions 23 to 39 are enriched in low complexity; that stretch reads SDASSSSGSFSKKSSTS. A phosphoserine mark is found at serine 46 and serine 48.

It belongs to the MOB1/phocein family. Interacts with orb6.

The protein localises to the cytoplasm. It localises to the cell cortex. Required for coordinating polarized cell growth during interphase with the onset of mitosis. The sequence is that of Maintenance of ploidy protein mob2 (mob2) from Schizosaccharomyces pombe (strain 972 / ATCC 24843) (Fission yeast).